A 440-amino-acid polypeptide reads, in one-letter code: Tryptophan aminotransferase-related protein 2 (440 aa).

Residues 7–26 (FLSWRNMLVLSLAINFSLIL) form a helical membrane-spanning segment. Pyridoxal 5'-phosphate contacts are provided by residues Tyr-112, 154 to 155 (ST), Asn-222, 242 to 245 (DLAY), 265 to 268 (TASK), and Arg-276. An N6-(pyridoxal phosphate)lysine modification is found at Lys-268.

Belongs to the alliinase family. It depends on pyridoxal 5'-phosphate as a cofactor. Expressed in roots, cotyledons and in the apical parts of hypocotyls. In roots, restricted to the provasculature of meristematic regions. Detected on the inner side of the apical hooks.

It localises to the membrane. The enzyme catalyses L-tryptophan + 2-oxoglutarate = indole-3-pyruvate + L-glutamate. It carries out the reaction L-tryptophan + pyruvate = indole-3-pyruvate + L-alanine. It participates in plant hormone metabolism; auxin biosynthesis. Inhibited by L-kynurenine. Its function is as follows. Involved in auxin production. Both TAA1 and TAR2 are required for maintaining proper auxin levels in roots, while TAA1, TAR1 and TAR2 are required for proper embryo patterning. Involved in the maintenance of the root stem cell niches. This Arabidopsis thaliana (Mouse-ear cress) protein is Tryptophan aminotransferase-related protein 2 (TAR2).